The sequence spans 97 residues: Citrate lyase acyl carrier protein (97 aa).

Serine 14 bears the O-(phosphoribosyl dephospho-coenzyme A)serine mark.

This sequence belongs to the CitD family. In terms of assembly, oligomer with a subunit composition of (alpha,beta,gamma)6.

It localises to the cytoplasm. In terms of biological role, covalent carrier of the coenzyme of citrate lyase. This chain is Citrate lyase acyl carrier protein, found in Rhodopseudomonas palustris (strain BisA53).